Here is a 117-residue protein sequence, read N- to C-terminus: Toxin CSTX-8 (117 aa).

Positions 1–20 (MKVLVICAVLFLAIFSNSSA) are cleaved as a signal peptide. Positions 21–47 (ETEDDFLEDESFQADDVIPFLASEQVR) are excised as a propeptide. Cystine bridges form between cysteine 50/cysteine 65, cysteine 57/cysteine 74, cysteine 64/cysteine 95, and cysteine 76/cysteine 93. The propeptide occupies 82–87 (RSETDR). Threonine 116 is subject to Threonine amide.

Belongs to the neurotoxin 19 (CSTX) family. 12 subfamily. In terms of assembly, heterodimer of A and B chains; disulfide-linked. Interacts with CSTX-1 (AC P81694), and with CSTX-9 (AC P58604). As to expression, expressed by the venom gland.

It localises to the secreted. The protein resides in the target cell membrane. Functionally, synergistic toxin that induces or increases a cytolytic effect when combined with CSTX-1 (AC P81694) or CSTX-9 (AC P58604). When alone, has a weak insecticidal activity, with an unknown molecular target. The protein is Toxin CSTX-8 of Cupiennius salei (American wandering spider).